A 379-amino-acid chain; its full sequence is Alcohol dehydrogenase 3 (379 aa).

Zn(2+) is bound by residues cysteine 47, threonine 49, histidine 69, cysteine 99, cysteine 102, cysteine 105, cysteine 113, and cysteine 177. An alcohol-binding residues include threonine 49 and histidine 69. Threonine 49 provides a ligand contact to NAD(+). Residues 202 to 207 (GLGAVG), aspartate 226, lysine 231, threonine 272, valine 295, 295 to 297 (VGV), phenylalanine 322, and arginine 372 contribute to the NAD(+) site.

This sequence belongs to the zinc-containing alcohol dehydrogenase family. Homodimer. It depends on Zn(2+) as a cofactor.

The protein localises to the cytoplasm. The enzyme catalyses a primary alcohol + NAD(+) = an aldehyde + NADH + H(+). It catalyses the reaction a secondary alcohol + NAD(+) = a ketone + NADH + H(+). The sequence is that of Alcohol dehydrogenase 3 (ADH3) from Hordeum vulgare (Barley).